Reading from the N-terminus, the 146-residue chain is Large ribosomal subunit protein uL11 (146 aa).

Belongs to the universal ribosomal protein uL11 family. As to quaternary structure, part of the ribosomal stalk of the 50S ribosomal subunit. Interacts with L10 and the large rRNA to form the base of the stalk. L10 forms an elongated spine to which L12 dimers bind in a sequential fashion forming a multimeric L10(L12)X complex. One or more lysine residues are methylated.

In terms of biological role, forms part of the ribosomal stalk which helps the ribosome interact with GTP-bound translation factors. In Wolbachia pipientis wMel, this protein is Large ribosomal subunit protein uL11.